Reading from the N-terminus, the 512-residue chain is Probable ubiquitin carboxyl-terminal hydrolase 3 (512 aa).

The tract at residues 64-109 (TSKTKESEKSPKSWSAIAKKHVQGDSPVKKSHSVPVPSDRSEKKSF) is disordered. In terms of domain architecture, USP spans 133 to 511 (RGFINTGNIC…VAYLLFYTRR (379 aa)). C142 functions as the Nucleophile in the catalytic mechanism. H453 (proton acceptor) is an active-site residue.

Belongs to the peptidase C19 family.

The catalysed reaction is Thiol-dependent hydrolysis of ester, thioester, amide, peptide and isopeptide bonds formed by the C-terminal Gly of ubiquitin (a 76-residue protein attached to proteins as an intracellular targeting signal).. The sequence is that of Probable ubiquitin carboxyl-terminal hydrolase 3 (ubp3) from Schizosaccharomyces pombe (strain 972 / ATCC 24843) (Fission yeast).